We begin with the raw amino-acid sequence, 158 residues long: Crossover junction endodeoxyribonuclease RuvC (158 aa).

Active-site residues include Asp7, Glu67, and Asp139. 3 residues coordinate Mg(2+): Asp7, Glu67, and Asp139.

It belongs to the RuvC family. In terms of assembly, homodimer which binds Holliday junction (HJ) DNA. The HJ becomes 2-fold symmetrical on binding to RuvC with unstacked arms; it has a different conformation from HJ DNA in complex with RuvA. In the full resolvosome a probable DNA-RuvA(4)-RuvB(12)-RuvC(2) complex forms which resolves the HJ. The cofactor is Mg(2+).

It localises to the cytoplasm. The enzyme catalyses Endonucleolytic cleavage at a junction such as a reciprocal single-stranded crossover between two homologous DNA duplexes (Holliday junction).. The RuvA-RuvB-RuvC complex processes Holliday junction (HJ) DNA during genetic recombination and DNA repair. Endonuclease that resolves HJ intermediates. Cleaves cruciform DNA by making single-stranded nicks across the HJ at symmetrical positions within the homologous arms, yielding a 5'-phosphate and a 3'-hydroxyl group; requires a central core of homology in the junction. The consensus cleavage sequence is 5'-(A/T)TT(C/G)-3'. Cleavage occurs on the 3'-side of the TT dinucleotide at the point of strand exchange. HJ branch migration catalyzed by RuvA-RuvB allows RuvC to scan DNA until it finds its consensus sequence, where it cleaves and resolves the cruciform DNA. This is Crossover junction endodeoxyribonuclease RuvC from Prochlorococcus marinus (strain MIT 9211).